We begin with the raw amino-acid sequence, 437 residues long: 3-phosphoshikimate 1-carboxyvinyltransferase (437 aa).

The 3-phosphoshikimate site is built by K24, S25, and R29. A phosphoenolpyruvate-binding site is contributed by K24. Phosphoenolpyruvate is bound by residues G95 and R123. Residues S168, Q170, D317, and K344 each coordinate 3-phosphoshikimate. A phosphoenolpyruvate-binding site is contributed by Q170. D317 (proton acceptor) is an active-site residue. 2 residues coordinate phosphoenolpyruvate: R348 and R390.

Belongs to the EPSP synthase family. In terms of assembly, monomer.

It localises to the cytoplasm. The enzyme catalyses 3-phosphoshikimate + phosphoenolpyruvate = 5-O-(1-carboxyvinyl)-3-phosphoshikimate + phosphate. It functions in the pathway metabolic intermediate biosynthesis; chorismate biosynthesis; chorismate from D-erythrose 4-phosphate and phosphoenolpyruvate: step 6/7. Functionally, catalyzes the transfer of the enolpyruvyl moiety of phosphoenolpyruvate (PEP) to the 5-hydroxyl of shikimate-3-phosphate (S3P) to produce enolpyruvyl shikimate-3-phosphate and inorganic phosphate. The sequence is that of 3-phosphoshikimate 1-carboxyvinyltransferase from Wolinella succinogenes (strain ATCC 29543 / DSM 1740 / CCUG 13145 / JCM 31913 / LMG 7466 / NCTC 11488 / FDC 602W) (Vibrio succinogenes).